A 171-amino-acid polypeptide reads, in one-letter code: Crossover junction endodeoxyribonuclease RuvC (171 aa).

Residues Asp7, Glu74, and Asp147 contribute to the active site. 3 residues coordinate Mg(2+): Asp7, Glu74, and Asp147.

It belongs to the RuvC family. As to quaternary structure, homodimer which binds Holliday junction (HJ) DNA. The HJ becomes 2-fold symmetrical on binding to RuvC with unstacked arms; it has a different conformation from HJ DNA in complex with RuvA. In the full resolvosome a probable DNA-RuvA(4)-RuvB(12)-RuvC(2) complex forms which resolves the HJ. It depends on Mg(2+) as a cofactor.

Its subcellular location is the cytoplasm. It catalyses the reaction Endonucleolytic cleavage at a junction such as a reciprocal single-stranded crossover between two homologous DNA duplexes (Holliday junction).. In terms of biological role, the RuvA-RuvB-RuvC complex processes Holliday junction (HJ) DNA during genetic recombination and DNA repair. Endonuclease that resolves HJ intermediates. Cleaves cruciform DNA by making single-stranded nicks across the HJ at symmetrical positions within the homologous arms, yielding a 5'-phosphate and a 3'-hydroxyl group; requires a central core of homology in the junction. The consensus cleavage sequence is 5'-(A/T)TT(C/G)-3'. Cleavage occurs on the 3'-side of the TT dinucleotide at the point of strand exchange. HJ branch migration catalyzed by RuvA-RuvB allows RuvC to scan DNA until it finds its consensus sequence, where it cleaves and resolves the cruciform DNA. The chain is Crossover junction endodeoxyribonuclease RuvC from Acidobacterium capsulatum (strain ATCC 51196 / DSM 11244 / BCRC 80197 / JCM 7670 / NBRC 15755 / NCIMB 13165 / 161).